Reading from the N-terminus, the 1055-residue chain is MASSSSRTRSSRPPSPASSTSSSHLSNRLIPRSNSTSASSLITSAAGIASRSMTPSRTFSDSGLIGSGSFGIGSPVPYPSEELLGDPMDDTISSERDSISVTVRFRPLSDREYQRGDEVAWYPDGDTLVRHEYNPLTAYAFDKVFGPQATTIDVYDVAARPVVKAAMEGVNGTVFAYGVTSSGKTHTMHGDQESPGIIPLAIKDVFSIIQDTPGREFLLRVSYLEIYNEVINDLLDPTGQNLRVREDSQGTYVEGIKEEVVLSPGHALSFIAAGEEHRHVGSNNFNLLSSRSHTIFTLMVESSATGDEYDGVIFSQLNLIDLAGSESSKTETTGLRRKEGSYINKSLLTLGTVIGKLSEGKATHIPYRDSKLTRLLQSSLSGHGHVSLICTITPASSSSEETHNTLKFASRAKSIEIYASRNQIIDEKSLIKKYQREISTLKLELDQLRRGMLVGVSHEELMSLKQQLEEGQVKMQSRLEEEEEAKAALMSRIQKLTKLILVSTKNSIPGYSGDIPTHQRSLSAGKDDKFDSLLLESDNLGSPSSTLALLSEGSLGFNHRRSSSKLNDENSPGAEFTQGVMTPDEIDLLVEQVKMLAGEIAFSTSTLKRLVDQSVNDPENSQTQIQNLEREIHEKQRQMRGLEQLIIESGEASIANASLVEMQQKVMSLMTQCNEKSFELEIKSADNCILQEQLQEKCTENKELHEKVNLLEQRLNAVSSEKSSPSCSNKAVSGEYADELKKKIQSQEIENEELKLEHVQIVEENSGLRVQNQKLAEEASYAKELASAAAVELKNLASEVTKLSLQNTKLEKELAAARDLAQTRNPMNGVNRKYNDGARSGRKGRISSSRSSGDEFDAWNLDPEDLKMELQVRKQREVALESALAEKEFIEDEYRKKAEEAKRREEALENDLANMWVLVAKLKKDNGALPEPNGTDPGRELEKSQSHAVLKERQVSSAPRQPEVVVVAKTEETPKEEPLVARLKARMQEMKEKEMKSQANGDANSHICKVCFESPTAAILLPCRHFCLCKSCSLACSECPICRTKISDRLFAFPS.

Over residues 1-23 (MASSSSRTRSSRPPSPASSTSSS) the composition is skewed to low complexity. Residues 1 to 36 (MASSSSRTRSSRPPSPASSTSSSHLSNRLIPRSNST) form a disordered region. The N-terminal 96 residues, 1 to 96 (MASSSSRTRS…PMDDTISSER (96 aa)), are a transit peptide targeting the mitochondrion. Positions 98 to 415 (SISVTVRFRP…LKFASRAKSI (318 aa)) constitute a Kinesin motor domain. 178–185 (GVTSSGKT) serves as a coordination point for ATP. Coiled-coil stretches lie at residues 419 to 503 (ASRN…ILVS), 618 to 653 (PENS…GEAS), and 694 to 823 (LQEK…LAQT). The disordered stretch occupies residues 826–856 (PMNGVNRKYNDGARSGRKGRISSSRSSGDEF). Residues 880–911 (LESALAEKEFIEDEYRKKAEEAKRREEALEND) are a coiled coil. The interval 926 to 963 (NGALPEPNGTDPGRELEKSQSHAVLKERQVSSAPRQPE) is disordered. Positions 937 to 954 (PGRELEKSQSHAVLKERQ) are enriched in basic and acidic residues. An RING-type zinc finger spans residues 1008–1043 (CKVCFESPTAAILLPCRHFCLCKSCSLACSECPICR).

The protein belongs to the TRAFAC class myosin-kinesin ATPase superfamily. Kinesin family. KIN-7 subfamily.

The protein localises to the mitochondrion. The polypeptide is Kinesin-like protein KIN-7D, mitochondrial (Arabidopsis thaliana (Mouse-ear cress)).